The following is a 258-amino-acid chain: Phosphoprotein ECPP44 (258 aa).

Disordered stretches follow at residues 1–25 (MASDDSVPQHSVEKTTEYESSDRGL), 46–131 (EKVQ…PVEV), and 148–175 (KLPGGGKKVEEETVAPPPPPAAAPVDCA). Composition is skewed to basic and acidic residues over residues 11 to 25 (SVEKTTEYESSDRGL), 46 to 80 (EKVQVSEPEPKYEDCKVVEEEEEKAAKPSLLEKLH), 109 to 124 (GLKEKIEEKIHHKEED), and 148 to 158 (KLPGGGKKVEE).

This sequence belongs to the plant dehydrin family. Phosphorylated in embryogenic and somatic embryos. Not phosphorylated in non-embryogenic cells.

In terms of biological role, phosphorylation of ECCP44 protein is thought to be involved in the acquisition of embryogenic competence. Unlike other dehydrins, it is not thought to function as an environmental stress tolerant. This chain is Phosphoprotein ECPP44 (ECPP44), found in Daucus carota (Wild carrot).